The primary structure comprises 511 residues: Phosphoenolpyruvate carboxylase (511 aa).

Belongs to the PEPCase type 2 family. Homotetramer. Mg(2+) is required as a cofactor.

It carries out the reaction oxaloacetate + phosphate = phosphoenolpyruvate + hydrogencarbonate. In terms of biological role, catalyzes the irreversible beta-carboxylation of phosphoenolpyruvate (PEP) to form oxaloacetate (OAA), a four-carbon dicarboxylic acid source for the tricarboxylic acid cycle. The chain is Phosphoenolpyruvate carboxylase from Saccharolobus islandicus (strain Y.G.57.14 / Yellowstone #1) (Sulfolobus islandicus).